A 253-amino-acid polypeptide reads, in one-letter code: MPTLLAFLEYDGSAFFGSQIQKEEPSVALALQRGLKSMGIASKVRFSGRTDRGVHATRQAVSFEVPYKKSDWGYFKEELNKKLFPYLRVRRLYPIREGLDPRFEAKSRAYRYLLSEEPLSAFASRYVTHAHLGDERKIQEAMKLLVGWHDFALFKKSGSQEKSTLREMRRCWLYRYRSYWVFYFEANGFLRLQIRLLVGALLKVGRGEMSLEEFKEQLEAKRRFFCEGAPPYGLYLCKVSFESSIWEVRDRNH.

The active-site Nucleophile is Asp51. Tyr110 is a binding site for substrate.

Belongs to the tRNA pseudouridine synthase TruA family. As to quaternary structure, homodimer.

It carries out the reaction uridine(38/39/40) in tRNA = pseudouridine(38/39/40) in tRNA. Its function is as follows. Formation of pseudouridine at positions 38, 39 and 40 in the anticodon stem and loop of transfer RNAs. The protein is tRNA pseudouridine synthase A of Wolinella succinogenes (strain ATCC 29543 / DSM 1740 / CCUG 13145 / JCM 31913 / LMG 7466 / NCTC 11488 / FDC 602W) (Vibrio succinogenes).